The primary structure comprises 496 residues: NAD(P)H-quinone oxidoreductase subunit 2, chloroplastic (496 aa).

14 helical membrane passes run 14–34 (SFLP…LDLV), 42–62 (MLVK…IQQW), 79–99 (FTTC…PLSF), 109–129 (LTEF…LSSA), 133–153 (ITIF…TGYV), 167–187 (LIIG…LYGL), 210–230 (LASW…LSLV), 244–264 (PTPV…ALTI), 281–301 (ILQI…MVET), 305–325 (RILT…IVAG), 334–354 (LVYM…IILF), 377–397 (ASCL…TGFF), 400–420 (ILLF…TGIF), and 469–489 (IYLC…VIYF).

It belongs to the complex I subunit 2 family. In terms of assembly, NDH is composed of at least 16 different subunits, 5 of which are encoded in the nucleus.

Its subcellular location is the plastid. The protein localises to the chloroplast thylakoid membrane. It catalyses the reaction a plastoquinone + NADH + (n+1) H(+)(in) = a plastoquinol + NAD(+) + n H(+)(out). The catalysed reaction is a plastoquinone + NADPH + (n+1) H(+)(in) = a plastoquinol + NADP(+) + n H(+)(out). Its function is as follows. NDH shuttles electrons from NAD(P)H:plastoquinone, via FMN and iron-sulfur (Fe-S) centers, to quinones in the photosynthetic chain and possibly in a chloroplast respiratory chain. The immediate electron acceptor for the enzyme in this species is believed to be plastoquinone. Couples the redox reaction to proton translocation, and thus conserves the redox energy in a proton gradient. This is NAD(P)H-quinone oxidoreductase subunit 2, chloroplastic from Chara vulgaris (Common stonewort).